The following is a 106-amino-acid chain: MAVKIRLARFGAKKRPFYRIVVADSRAPRDGRFIERIGQYDPMLSKDNKNCVVVKADRLKYWLNVGAQASERVLWFIKKGIITLEAEKKKVETKKAEIKKVKEQEV.

It belongs to the bacterial ribosomal protein bS16 family.

The protein is Small ribosomal subunit protein bS16 of Wolbachia sp. subsp. Brugia malayi (strain TRS).